The primary structure comprises 215 residues: KID-containing protein 1 (215 aa).

Disordered stretches follow at residues 1 to 132 (MAGG…NKKR) and 150 to 183 (NPKS…GDVL). The segment covering 64-81 (DSEEEDEESEEDNDEEEL) has biased composition (acidic residues). The Nuclear localization signal motif lies at 129 to 137 (NKKRRLQIY). A compositionally biased stretch (acidic residues) spans 162–175 (DNDDEEGDDGDLSD). Residues 177–204 (ERGGDVLARRPSFKNRALKSMSCFALSD) are kinase-inducible domain (KID). Serine 188 carries the post-translational modification Phosphoserine; by PKA.

In terms of assembly, interacts with HDA19; Ser-188 is critical for this interaction. Strongly expressed in stems, flowers, roots and immature siliques, but not detected in leaf blades of seedlings.

It is found in the nucleus. Functionally, transcription activator which may regulates gene expression through interaction with the histone deacetylase HDA19. The chain is KID-containing protein 1 from Brassica napus (Rape).